We begin with the raw amino-acid sequence, 249 residues long: MVEMNFKVEAFEGPLDLLLHLIGQLEVDIYDIPMAEITDQYMEFVHTMQEMELDVASEYLVMAATLLAIKSKMLLPKQELEIDYDTLEEEEDPRDALVEKLMEYKRFKEAAKELKEKEAERSFYFSKPPMDLAEYDEGTKVAELDVSLNDMLSAFNKMLRRKKLNKPLHTRITTQEISIDDRMNSVLGKLHQQTNHRLRFDELFEEQTKEQLVVTFLALLELMKRKLVEVEQSASFADLYVQGKGEELS.

The protein belongs to the ScpA family. In terms of assembly, component of a cohesin-like complex composed of ScpA, ScpB and the Smc homodimer, in which ScpA and ScpB bind to the head domain of Smc. The presence of the three proteins is required for the association of the complex with DNA.

The protein resides in the cytoplasm. Its function is as follows. Participates in chromosomal partition during cell division. May act via the formation of a condensin-like complex containing Smc and ScpB that pull DNA away from mid-cell into both cell halves. The sequence is that of Segregation and condensation protein A from Listeria innocua serovar 6a (strain ATCC BAA-680 / CLIP 11262).